Here is a 376-residue protein sequence, read N- to C-terminus: Nucleoside diphosphate kinase homolog 7 (376 aa).

In terms of domain architecture, DM10 spans 3 to 91 (HSERFVFIAE…YTARQLGSRK (89 aa)).

Belongs to the NDK family. As to quaternary structure, component of sperm flagellar doublet microtubules. Component of the gamma-tubulin ring complex. Undergoes autophosphorylation. In terms of tissue distribution, expressed in airway epithelial cells.

Its subcellular location is the cytoplasm. It is found in the cytoskeleton. The protein localises to the microtubule organizing center. It localises to the centrosome. The protein resides in the nucleus. Its subcellular location is the spindle. It is found in the cilium axoneme. The protein localises to the flagellum axoneme. It localises to the cell projection. The protein resides in the cilium. In terms of biological role, possesses an intrinsic kinase activity. Displays 3'-5' exonuclease activity with a preference for single-stranded DNA. Does not seem to have nucleoside diphosphate kinase activity. Functional component of the gamma-tubulin ring complex, implicated in the regulation of the microtubule-nucleating activity of the gamma-tubulin ring complex in centrosomes, in a kinase activity-dependent manner. Part of the dynein-decorated doublet microtubules (DMTs) in cilia axoneme, which is required for motile cilia beating. This Homo sapiens (Human) protein is Nucleoside diphosphate kinase homolog 7.